The chain runs to 248 residues: Anamorsin homolog (248 aa).

The interval 4-129 (FKGLQKSLYI…ETGSSARLSF (126 aa)) is N-terminal SAM-like domain. The tract at residues 130 to 161 (AKKNASAVNVWKISGDDEELIDEEELLDEEDK) is linker. [2Fe-2S] cluster contacts are provided by C172, C181, C184, and C186. The fe-S binding site A stretch occupies residues 172–186 (CSTTGKRKACKNCSC). Positions 209, 212, 220, and 223 each coordinate [4Fe-4S] cluster. 2 consecutive short sequence motifs (cx2C motif) follow at residues 209–212 (CGNC) and 220–223 (CSTC). Residues 209-223 (CGNCYLGDAFRCSTC) form a fe-S binding site B region.

It belongs to the anamorsin family. As to quaternary structure, monomer. Requires [2Fe-2S] cluster as cofactor. The cofactor is [4Fe-4S] cluster.

It is found in the cytoplasm. The protein resides in the mitochondrion intermembrane space. Component of the cytosolic iron-sulfur (Fe-S) protein assembly (CIA) machinery. Required for the maturation of extramitochondrial Fe-S proteins. Part of an electron transfer chain functioning in an early step of cytosolic Fe-S biogenesis, facilitating the de novo assembly of a [4Fe-4S] cluster on the cytosolic Fe-S scaffold complex. Electrons are transferred from NADPH via a FAD- and FMN-containing diflavin oxidoreductase. Together with the diflavin oxidoreductase, also required for the assembly of the diferric tyrosyl radical cofactor of ribonucleotide reductase (RNR), probably by providing electrons for reduction during radical cofactor maturation in the catalytic small subunit. This chain is Anamorsin homolog, found in Drosophila melanogaster (Fruit fly).